A 358-amino-acid polypeptide reads, in one-letter code: Putative zinc metalloprotease BH06270 (358 aa).

H7 lines the Zn(2+) pocket. E8 is an active-site residue. Position 11 (H11) interacts with Zn(2+). The next 3 helical transmembrane spans lie at 89–111 (ATVF…FFFF), 282–304 (FLSL…LFPI), and 332–354 (IIFR…NDYF). The 76-residue stretch at 102 to 177 (TVVILTFFFF…IEFKMERSGQ (76 aa)) folds into the PDZ domain.

This sequence belongs to the peptidase M50B family. It depends on Zn(2+) as a cofactor.

Its subcellular location is the cell inner membrane. The chain is Putative zinc metalloprotease BH06270 from Bartonella henselae (strain ATCC 49882 / DSM 28221 / CCUG 30454 / Houston 1) (Rochalimaea henselae).